Reading from the N-terminus, the 58-residue chain is UPF0434 protein Sfri_2386 (58 aa).

This sequence belongs to the UPF0434 family.

This chain is UPF0434 protein Sfri_2386, found in Shewanella frigidimarina (strain NCIMB 400).